Reading from the N-terminus, the 606-residue chain is DNA ligase (606 aa).

An ATP-binding site is contributed by glutamate 263. The active-site N6-AMP-lysine intermediate is the lysine 265. Arginine 270, arginine 285, glutamate 315, phenylalanine 355, arginine 432, and lysine 438 together coordinate ATP.

It belongs to the ATP-dependent DNA ligase family. The cofactor is Mg(2+). Mn(2+) serves as cofactor.

It catalyses the reaction ATP + (deoxyribonucleotide)n-3'-hydroxyl + 5'-phospho-(deoxyribonucleotide)m = (deoxyribonucleotide)n+m + AMP + diphosphate.. The enzyme catalyses ADP + (deoxyribonucleotide)n-3'-hydroxyl + 5'-phospho-(deoxyribonucleotide)m = (deoxyribonucleotide)n+m + AMP + phosphate.. The catalysed reaction is GTP + (deoxyribonucleotide)n-3'-hydroxyl + 5'-phospho-(deoxyribonucleotide)m = (deoxyribonucleotide)n+m + GMP + diphosphate.. Functionally, DNA ligase that seals nicks in double-stranded DNA during DNA replication, DNA recombination and DNA repair. Can use ATP, ADP and GTP, but not CTP, TTP or NAD(+). This Sulfophobococcus zilligii protein is DNA ligase.